A 563-amino-acid polypeptide reads, in one-letter code: Developmental regulatory protein wetA (563 aa).

Polar residues-rich tracts occupy residues 54–69 (EQSPIISTSKQQTHPS) and 160–175 (HKQSFSPSLTRPSQFQ). Disordered stretches follow at residues 54–81 (EQSPIISTSKQQTHPSPQWAKDFWSLPP), 112–176 (ASST…QFQK), 272–318 (SNNS…PDLQ), 334–356 (PQRQPSYQQVVASPPPQQPIQNT), 430–494 (PQLH…SPKG), and 516–538 (GVAPSGSSKTKARREQEARDRRR). Positions 272-305 (SNNSTVTSSPPSADDIFPSPHSSDPQSMSSWHSD) are enriched in low complexity. Over residues 430–441 (PQLHPQSRSPSL) the composition is skewed to polar residues.

Belongs to the wetA family.

Functionally, brlA, abaA and wetA are pivotal regulators of conidiophore development and conidium maturation. They act individually and together to regulate their own expression and that of numerous other sporulation-specific genes. The polypeptide is Developmental regulatory protein wetA (Aspergillus oryzae (strain ATCC 42149 / RIB 40) (Yellow koji mold)).